Consider the following 47-residue polypeptide: Delta-stichotoxin-Hcr3a (47 aa).

P3 is subject to Hydroxyproline. 3 cysteine pairs are disulfide-bonded: C4/C44, C6/C34, and C27/C45.

It belongs to the sea anemone sodium channel inhibitory toxin family. Type I subfamily.

It is found in the secreted. The protein localises to the nematocyst. Inhibits voltage-gated sodium channels (Nav). This chain is Delta-stichotoxin-Hcr3a, found in Radianthus crispa (Leathery sea anemone).